A 439-amino-acid polypeptide reads, in one-letter code: Gap junction gamma-2 protein (439 aa).

Over 1–25 (MTNMSWSFLTRLLEEIHNHSTFVGK) the chain is Cytoplasmic. The helical transmembrane segment at 26-46 (VWLTVLVVFRIVLTAVGGEAI) threads the bilayer. Residues 47 to 78 (YSDEQAKFTCNTRQPGCDNVCYDAFAPLSHVR) are Extracellular-facing. A helical membrane pass occupies residues 79 to 99 (FWVFQIVVISTPSVMYLGYAV). Over 100–216 (HRLARASEQE…EGLMRVYVAQ (117 aa)) the chain is Cytoplasmic. A disordered region spans residues 108 to 178 (QERRRALRRR…AEEAGAEEAC (71 aa)). The span at 112 to 125 (RALRRRPGPRRAPR) shows a compositional bias: basic residues. The segment covering 140-174 (DLGEEEPMLGLGEEEEEEETGAAEGAGEEAEEAGA) has biased composition (acidic residues). Residues 217 to 237 (LVARAAFEVAFLVGQYLLYGF) form a helical membrane-spanning segment. Residues 238-265 (EVRPFFPCSRQPCPHVVDCFVSRPTEKT) lie on the Extracellular side of the membrane. Residues 266–286 (VFLLVMYVVSCLCLLLNLCEM) traverse the membrane as a helical segment. Residues 287–439 (AHLGLGSAQD…SRDGKTTVWI (153 aa)) are Cytoplasmic-facing. The tract at residues 364–439 (AGDRDRDSSP…SRDGKTTVWI (76 aa)) is disordered. Ser-371 carries the phosphoserine modification. Residues 378–393 (PAASRGPPRAGAPASR) show a composition bias toward low complexity.

It belongs to the connexin family. Gamma-type subfamily. A connexon is composed of a hexamer of connexins. Interacts with TJP1. Expressed in central nervous system, in sciatic nerve and sural nerve. Also detected in skeletal muscles.

It localises to the cell membrane. It is found in the cell junction. The protein resides in the gap junction. Functionally, one gap junction consists of a cluster of closely packed pairs of transmembrane channels, the connexons, through which materials of low MW diffuse from one cell to a neighboring cell. May play a role in myelination in central and peripheral nervous systems. The sequence is that of Gap junction gamma-2 protein (GJC2) from Homo sapiens (Human).